Reading from the N-terminus, the 376-residue chain is Deoxyguanosinetriphosphate triphosphohydrolase-like protein (376 aa).

Residues 62–198 (RLTHSLEVSA…AALADDISYI (137 aa)) enclose the HD domain.

Belongs to the dGTPase family. Type 2 subfamily.

The chain is Deoxyguanosinetriphosphate triphosphohydrolase-like protein from Rickettsia canadensis (strain McKiel).